Reading from the N-terminus, the 90-residue chain is Probable Fe(2+)-trafficking protein (90 aa).

Belongs to the Fe(2+)-trafficking protein family.

Could be a mediator in iron transactions between iron acquisition and iron-requiring processes, such as synthesis and/or repair of Fe-S clusters in biosynthetic enzymes. The sequence is that of Probable Fe(2+)-trafficking protein from Methylococcus capsulatus (strain ATCC 33009 / NCIMB 11132 / Bath).